Consider the following 426-residue polypeptide: 3-phosphoshikimate 1-carboxyvinyltransferase (426 aa).

Lys-22, Ser-23, and Arg-27 together coordinate 3-phosphoshikimate. Lys-22 contributes to the phosphoenolpyruvate binding site. Phosphoenolpyruvate is bound by residues Gly-96 and Arg-124. Positions 170 and 171 each coordinate 3-phosphoshikimate. A phosphoenolpyruvate-binding site is contributed by Gln-172. 3-phosphoshikimate contacts are provided by Ser-198, Asp-314, Asn-337, and Lys-341. The active-site Proton acceptor is Asp-314. Residues Arg-345, Arg-387, and Lys-412 each contribute to the phosphoenolpyruvate site.

The protein belongs to the EPSP synthase family. As to quaternary structure, homotetramer.

The protein resides in the cytoplasm. It carries out the reaction 3-phosphoshikimate + phosphoenolpyruvate = 5-O-(1-carboxyvinyl)-3-phosphoshikimate + phosphate. It participates in metabolic intermediate biosynthesis; chorismate biosynthesis; chorismate from D-erythrose 4-phosphate and phosphoenolpyruvate: step 6/7. Its function is as follows. Catalyzes the transfer of the enolpyruvyl moiety of phosphoenolpyruvate (PEP) to the 5-hydroxyl of shikimate-3-phosphate (S3P) to produce enolpyruvyl shikimate-3-phosphate and inorganic phosphate. In Vibrio cholerae serotype O1 (strain ATCC 39315 / El Tor Inaba N16961), this protein is 3-phosphoshikimate 1-carboxyvinyltransferase.